The sequence spans 195 residues: Large ribosomal subunit protein bL27c (195 aa).

A chloroplast-targeting transit peptide spans 1-60 (MASMAFTLVGAFKGMSLSSPCHSSSSASFLRADRVSLSVGGGVGMGVPMTMPVRRLTIQM).

This sequence belongs to the bacterial ribosomal protein bL27 family. Part of the 50S ribosomal subunit.

Its subcellular location is the plastid. It localises to the chloroplast. The sequence is that of Large ribosomal subunit protein bL27c (RPL27) from Oryza sativa subsp. japonica (Rice).